The sequence spans 252 residues: uncharacterized protein (252 aa).

The helical transmembrane segment at 80–100 (LSVLVIGSTMFTHAGVLPVLA) threads the bilayer.

The protein resides in the host membrane. It is found in the virion. This is an uncharacterized protein from Acanthamoeba polyphaga mimivirus (APMV).